A 342-amino-acid polypeptide reads, in one-letter code: Probable allantoicase (342 aa).

Belongs to the allantoicase family.

The enzyme catalyses allantoate + H2O = (S)-ureidoglycolate + urea. It participates in nitrogen metabolism; (S)-allantoin degradation; (S)-ureidoglycolate from allantoate (aminidohydrolase route): step 1/1. In terms of biological role, utilization of purines as secondary nitrogen sources, when primary sources are limiting. The polypeptide is Probable allantoicase (Schizosaccharomyces pombe (strain 972 / ATCC 24843) (Fission yeast)).